The chain runs to 450 residues: Deoxyguanosinetriphosphate triphosphohydrolase-like protein (450 aa).

Residues 61–201 (RLTHSLEVAQ…AKLAPELNAD (141 aa)) form the HD domain.

The protein belongs to the dGTPase family. Type 2 subfamily.

In Pasteurella multocida (strain Pm70), this protein is Deoxyguanosinetriphosphate triphosphohydrolase-like protein.